A 485-amino-acid chain; its full sequence is NADH-quinone oxidoreductase subunit N (485 aa).

14 helical membrane passes run Leu8–Ile28, Phe35–Val55, Gly71–Ala91, Phe105–Leu125, Ala127–Phe147, Tyr159–Ala179, Leu203–Phe223, Pro235–Met255, Val271–Gln291, Leu297–Gln317, Val326–Leu346, Ala373–Ile393, Trp408–Val430, and Ile455–Ile475.

Belongs to the complex I subunit 2 family. In terms of assembly, NDH-1 is composed of 13 different subunits. Subunits NuoA, H, J, K, L, M, N constitute the membrane sector of the complex.

The protein localises to the cell inner membrane. The catalysed reaction is a quinone + NADH + 5 H(+)(in) = a quinol + NAD(+) + 4 H(+)(out). NDH-1 shuttles electrons from NADH, via FMN and iron-sulfur (Fe-S) centers, to quinones in the respiratory chain. The immediate electron acceptor for the enzyme in this species is believed to be ubiquinone. Couples the redox reaction to proton translocation (for every two electrons transferred, four hydrogen ions are translocated across the cytoplasmic membrane), and thus conserves the redox energy in a proton gradient. In Salmonella typhimurium (strain LT2 / SGSC1412 / ATCC 700720), this protein is NADH-quinone oxidoreductase subunit N.